Here is a 64-residue protein sequence, read N- to C-terminus: Large ribosomal subunit protein bL32 (64 aa).

It belongs to the bacterial ribosomal protein bL32 family.

The chain is Large ribosomal subunit protein bL32 from Bifidobacterium longum (strain DJO10A).